The sequence spans 193 residues: MIWLRSSVVLLIFLTLITGVAYPLLATGLSELMFPYQAQGSMVKQDGQTVGSELIGQPFTKAIYFQGRPSATVDYPYNTLSSGGSNLATTNPILDDEIKRRVEQLRQFNRQPDIPVPVDLVTASASGLDPHISPAAADFQAQRVADARHLPIKVIKQLIRDNIEHPPSEFLGEPVINVLKLNLALDNLPEKKQ.

Residues 8-28 (VVLLIFLTLITGVAYPLLATG) form a helical membrane-spanning segment.

Belongs to the KdpC family. As to quaternary structure, the system is composed of three essential subunits: KdpA, KdpB and KdpC.

It localises to the cell inner membrane. Its function is as follows. Part of the high-affinity ATP-driven potassium transport (or Kdp) system, which catalyzes the hydrolysis of ATP coupled with the electrogenic transport of potassium into the cytoplasm. This subunit acts as a catalytic chaperone that increases the ATP-binding affinity of the ATP-hydrolyzing subunit KdpB by the formation of a transient KdpB/KdpC/ATP ternary complex. The chain is Potassium-transporting ATPase KdpC subunit from Photorhabdus laumondii subsp. laumondii (strain DSM 15139 / CIP 105565 / TT01) (Photorhabdus luminescens subsp. laumondii).